A 20-amino-acid chain; its full sequence is Glutathione S-transferase 2 (20 aa).

In terms of domain architecture, GST N-terminal spans 1-20 (GYKVTYFAIRGLAEPIXLLL). Residue Tyr6 participates in glutathione binding.

It belongs to the GST superfamily. Sigma family.

It catalyses the reaction RX + glutathione = an S-substituted glutathione + a halide anion + H(+). In terms of biological role, conjugation of reduced glutathione to a wide number of exogenous and endogenous hydrophobic electrophiles. The protein is Glutathione S-transferase 2 (GST2) of Ascaris suum (Pig roundworm).